The chain runs to 219 residues: Octanoyltransferase (219 aa).

A BPL/LPL catalytic domain is found at Glu32–Lys207. Residues Arg71–His78, Ser138–Gly140, and Gly151–Ala153 each bind substrate. The active-site Acyl-thioester intermediate is Cys169.

This sequence belongs to the LipB family.

Its subcellular location is the cytoplasm. It catalyses the reaction octanoyl-[ACP] + L-lysyl-[protein] = N(6)-octanoyl-L-lysyl-[protein] + holo-[ACP] + H(+). The protein operates within protein modification; protein lipoylation via endogenous pathway; protein N(6)-(lipoyl)lysine from octanoyl-[acyl-carrier-protein]: step 1/2. Its function is as follows. Catalyzes the transfer of endogenously produced octanoic acid from octanoyl-acyl-carrier-protein onto the lipoyl domains of lipoate-dependent enzymes. Lipoyl-ACP can also act as a substrate although octanoyl-ACP is likely to be the physiological substrate. This Shewanella pealeana (strain ATCC 700345 / ANG-SQ1) protein is Octanoyltransferase.